The sequence spans 146 residues: Hemoglobin subunit beta (146 aa).

An N-acetylvaline modification is found at Val1. The Globin domain occupies 2–146 (HLTADEKVSL…VANALAHKYH (145 aa)). Ser44 is subject to Phosphoserine. Residue Lys59 is modified to N6-acetyllysine. Position 63 (His63) interacts with heme b. N6-acetyllysine is present on Lys82. A heme b-binding site is contributed by His92. S-nitrosocysteine is present on Cys93. The residue at position 144 (Lys144) is an N6-acetyllysine.

It belongs to the globin family. In terms of assembly, heterotetramer of two alpha chains and two beta chains. As to expression, red blood cells.

Involved in oxygen transport from the lung to the various peripheral tissues. This chain is Hemoglobin subunit beta, found in Tamias striatus (Eastern chipmunk).